Consider the following 297-residue polypeptide: Acetaldehyde dehydrogenase (297 aa).

15-18 (SGSI) contributes to the NAD(+) binding site. The Acyl-thioester intermediate role is filled by C130. NAD(+)-binding positions include 162–170 (SAGIATREN) and N272.

This sequence belongs to the acetaldehyde dehydrogenase family.

It catalyses the reaction acetaldehyde + NAD(+) + CoA = acetyl-CoA + NADH + H(+). In Burkholderia thailandensis (strain ATCC 700388 / DSM 13276 / CCUG 48851 / CIP 106301 / E264), this protein is Acetaldehyde dehydrogenase (mhpF).